Consider the following 834-residue polypeptide: MNSDLEYLEDGFDPNSMKVATLRRILVENNVDFPSNARKNALVGLFDEKVKPQIPQLRKMYLNVRPSDEGIVKMDRPSSSPSIASPRRSRRARREKSASPMAKQFKKNRILDDVSNDDDDDDDDDDDNDKKDDPLIVPSGTDTDEVDDEEDDVITSSSNKSDTNDFQQNSDTRKKRKDPDSDDWSESNSKENKIDNKHLNLLSSDSEIEQDYQKAKKRKTSDLNQEHGNGSAILGKLSVKTPIKNTNRKPVSMDNFNDSLTSSGTENDPFVPNIRHNPKELGTANGTGHSTPLSKLKVSASFADKLPQKEVPSTILVPEVEQQEPSQSERTPSLFSSEGSGSESEAPLLPEITTPGPHQPMGNTSNNVVEMIDTDSSNLVSDEDEVLVPTRIETPQLPTEKDVEKCEARVQELQEEVNEQLEHENGSEFDVKQGSGKVGNRHKFKRALKFLSKSLLALFLFCIFIVIPLLFGLWYREQRLLIGYCGHEVPSHRVSGNSFEFIQKLDNLLQDYRPKCIPCPPNGICYPYLKLKCKPDYKLAPSRLDFLEIIPAQGKCVKDDKKQQLVSEVVEKSLEFLRAKNAQISCGDGKDDIESGMTEDALYQIFNEARAPWIRDDEFEDLWIQVIKDLTEEPEILWRQLSPTDNNIGGNSNNIIKTNDVPRQKRHLPEKFISKTRNFRSTSKKYIGMKCRFEREIYQTYKKFQRPIWLMFLLIVISKVIEIKLKNYYRKKARIEELVTQTMEKLKFQKIKSMSDPKENAYLSIVQLRDIFLSDIVDLKYKNQLWSEVVKYLEHNNSNIKSNLTEIRGEIMKCWEWIGPMELNEPKDSAENKI.

The tract at residues 68 to 292 (DEGIVKMDRP…TANGTGHSTP (225 aa)) is disordered. Over residues 77–86 (PSSSPSIASP) the composition is skewed to low complexity. Phosphoserine occurs at positions 78, 80, and 85. 2 stretches are compositionally biased toward acidic residues: residues 114-127 (VSNDDDDDDDDDDD) and 142-153 (DTDEVDDEEDDV). Residues 154 to 170 (ITSSSNKSDTNDFQQNS) show a composition bias toward polar residues. Serine 181 is modified (phosphoserine). The span at 188-198 (NSKENKIDNKH) shows a compositional bias: basic and acidic residues. Serine 203, serine 204, and serine 206 each carry phosphoserine. Over residues 243–266 (IKNTNRKPVSMDNFNDSLTSSGTE) the composition is skewed to polar residues. Position 301 is a phosphoserine (serine 301). The interval 307-364 (PQKEVPSTILVPEVEQQEPSQSERTPSLFSSEGSGSESEAPLLPEITTPGPHQPMGNT) is disordered. 2 stretches are compositionally biased toward low complexity: residues 317-329 (VPEVEQQEPSQSE) and 336-345 (SSEGSGSESE). A Phosphothreonine modification is found at threonine 394. Residue serine 427 is modified to Phosphoserine. The next 2 membrane-spanning stretches (helical) occupy residues 455–475 (LLALFLFCIFIVIPLLFGLWY) and 708–728 (IWLMFLLIVISKVIEIKLKNY).

The protein localises to the nucleus inner membrane. Functionally, plays a role in sister chromatid separation. The chain is Inner nuclear membrane protein SRC1 (SRC1) from Saccharomyces cerevisiae (strain ATCC 204508 / S288c) (Baker's yeast).